The primary structure comprises 306 residues: Lipoyl synthase (306 aa).

Residues Cys-55, Cys-60, Cys-66, Cys-81, Cys-85, Cys-88, and Ser-294 each contribute to the [4Fe-4S] cluster site. One can recognise a Radical SAM core domain in the interval Trp-67 to Thr-283.

This sequence belongs to the radical SAM superfamily. Lipoyl synthase family. [4Fe-4S] cluster serves as cofactor.

The protein resides in the cytoplasm. The enzyme catalyses [[Fe-S] cluster scaffold protein carrying a second [4Fe-4S](2+) cluster] + N(6)-octanoyl-L-lysyl-[protein] + 2 oxidized [2Fe-2S]-[ferredoxin] + 2 S-adenosyl-L-methionine + 4 H(+) = [[Fe-S] cluster scaffold protein] + N(6)-[(R)-dihydrolipoyl]-L-lysyl-[protein] + 4 Fe(3+) + 2 hydrogen sulfide + 2 5'-deoxyadenosine + 2 L-methionine + 2 reduced [2Fe-2S]-[ferredoxin]. The protein operates within protein modification; protein lipoylation via endogenous pathway; protein N(6)-(lipoyl)lysine from octanoyl-[acyl-carrier-protein]: step 2/2. Its function is as follows. Catalyzes the radical-mediated insertion of two sulfur atoms into the C-6 and C-8 positions of the octanoyl moiety bound to the lipoyl domains of lipoate-dependent enzymes, thereby converting the octanoylated domains into lipoylated derivatives. The protein is Lipoyl synthase of Chloroflexus aurantiacus (strain ATCC 29364 / DSM 637 / Y-400-fl).